The chain runs to 120 residues: Ribosome-binding factor A (120 aa).

Belongs to the RbfA family. In terms of assembly, monomer. Binds 30S ribosomal subunits, but not 50S ribosomal subunits or 70S ribosomes.

The protein localises to the cytoplasm. One of several proteins that assist in the late maturation steps of the functional core of the 30S ribosomal subunit. Associates with free 30S ribosomal subunits (but not with 30S subunits that are part of 70S ribosomes or polysomes). Required for efficient processing of 16S rRNA. May interact with the 5'-terminal helix region of 16S rRNA. The polypeptide is Ribosome-binding factor A (Chlamydia felis (strain Fe/C-56) (Chlamydophila felis)).